A 370-amino-acid polypeptide reads, in one-letter code: (5-formylfuran-3-yl)methyl phosphate transaminase (370 aa).

Lysine 222 is modified (N6-(pyridoxal phosphate)lysine).

Belongs to the class-I pyridoxal-phosphate-dependent aminotransferase family. As to quaternary structure, homodimer. Pyridoxal 5'-phosphate is required as a cofactor.

It localises to the cytoplasm. The enzyme catalyses 4-(hydroxymethyl)-2-furancarboxaldehyde phosphate + L-alanine = [5-(aminomethyl)-3-furyl]methyl phosphate + pyruvate. Its pathway is cofactor biosynthesis; methanofuran biosynthesis. Functionally, catalyzes the transamination reaction between 4-(hydroxymethyl)-2-furancarboxaldehyde phosphate (4-HFC-P) and alanine to produce pyruvate and 5-(aminomethyl)-3-furanmethanol phosphate (F1-P), the precursor for the furan moiety in methanofuran. This Methanocaldococcus jannaschii (strain ATCC 43067 / DSM 2661 / JAL-1 / JCM 10045 / NBRC 100440) (Methanococcus jannaschii) protein is (5-formylfuran-3-yl)methyl phosphate transaminase.